Here is a 135-residue protein sequence, read N- to C-terminus: Meiotically up-regulated gene 116 protein (135 aa).

Residues 20–39 traverse the membrane as a helical segment; it reads YFHSFHCFFLLCFTVMLCVV. The segment at 81–101 is disordered; it reads QTPTKKGNKTKKKRKKEKKKE. Over residues 86–98 the composition is skewed to basic residues; the sequence is KGNKTKKKRKKEK.

It localises to the mitochondrion membrane. Its function is as follows. Has a role in meiosis. The protein is Meiotically up-regulated gene 116 protein (mug116) of Schizosaccharomyces pombe (strain 972 / ATCC 24843) (Fission yeast).